The primary structure comprises 199 residues: Holliday junction branch migration complex subunit RuvA (199 aa).

The tract at residues 1–64 (MIGRITGILL…EDGHFLYGFA (64 aa)) is domain I. Residues 65–143 (SADERAAFRQ…RALPGFGAST (79 aa)) form a domain II region. The segment at 144-152 (VPGAAAQPA) is flexible linker. The interval 152–199 (ADSRSDILNALLALGYSDKEAQSALKAIPPETGVSDGIRQALKLLSKA) is domain III.

This sequence belongs to the RuvA family. Homotetramer. Forms an RuvA(8)-RuvB(12)-Holliday junction (HJ) complex. HJ DNA is sandwiched between 2 RuvA tetramers; dsDNA enters through RuvA and exits via RuvB. An RuvB hexamer assembles on each DNA strand where it exits the tetramer. Each RuvB hexamer is contacted by two RuvA subunits (via domain III) on 2 adjacent RuvB subunits; this complex drives branch migration. In the full resolvosome a probable DNA-RuvA(4)-RuvB(12)-RuvC(2) complex forms which resolves the HJ.

Its subcellular location is the cytoplasm. In terms of biological role, the RuvA-RuvB-RuvC complex processes Holliday junction (HJ) DNA during genetic recombination and DNA repair, while the RuvA-RuvB complex plays an important role in the rescue of blocked DNA replication forks via replication fork reversal (RFR). RuvA specifically binds to HJ cruciform DNA, conferring on it an open structure. The RuvB hexamer acts as an ATP-dependent pump, pulling dsDNA into and through the RuvAB complex. HJ branch migration allows RuvC to scan DNA until it finds its consensus sequence, where it cleaves and resolves the cruciform DNA. The chain is Holliday junction branch migration complex subunit RuvA from Aromatoleum aromaticum (strain DSM 19018 / LMG 30748 / EbN1) (Azoarcus sp. (strain EbN1)).